A 461-amino-acid chain; its full sequence is Bifunctional protein GlmU (461 aa).

A pyrophosphorylase region spans residues 1 to 232; that stretch reads MNLQIIILAA…SFEVQGINNR (232 aa). Residues 8-11, Lys22, Gln73, and 78-79 contribute to the UDP-N-acetyl-alpha-D-glucosamine site; these read LAAG and GT. Residue Asp102 coordinates Mg(2+). The UDP-N-acetyl-alpha-D-glucosamine site is built by Gly142, Glu157, and Asn230. Asn230 is a Mg(2+) binding site. The interval 233–253 is linker; it reads QQLQQLERIWQQRAANQLMEK. The interval 254–461 is N-acetyltransferase; sequence GATLADANRF…WKRPVKRERD (208 aa). Residues Arg336 and Lys354 each contribute to the UDP-N-acetyl-alpha-D-glucosamine site. His366 (proton acceptor) is an active-site residue. Positions 369 and 380 each coordinate UDP-N-acetyl-alpha-D-glucosamine. Residues Ala383, 389–390, Ser408, and Ala426 each bind acetyl-CoA; that span reads NY.

In the N-terminal section; belongs to the N-acetylglucosamine-1-phosphate uridyltransferase family. The protein in the C-terminal section; belongs to the transferase hexapeptide repeat family. Homotrimer. Mg(2+) serves as cofactor.

The protein localises to the cytoplasm. It carries out the reaction alpha-D-glucosamine 1-phosphate + acetyl-CoA = N-acetyl-alpha-D-glucosamine 1-phosphate + CoA + H(+). The catalysed reaction is N-acetyl-alpha-D-glucosamine 1-phosphate + UTP + H(+) = UDP-N-acetyl-alpha-D-glucosamine + diphosphate. Its pathway is nucleotide-sugar biosynthesis; UDP-N-acetyl-alpha-D-glucosamine biosynthesis; N-acetyl-alpha-D-glucosamine 1-phosphate from alpha-D-glucosamine 6-phosphate (route II): step 2/2. The protein operates within nucleotide-sugar biosynthesis; UDP-N-acetyl-alpha-D-glucosamine biosynthesis; UDP-N-acetyl-alpha-D-glucosamine from N-acetyl-alpha-D-glucosamine 1-phosphate: step 1/1. It functions in the pathway bacterial outer membrane biogenesis; LPS lipid A biosynthesis. Catalyzes the last two sequential reactions in the de novo biosynthetic pathway for UDP-N-acetylglucosamine (UDP-GlcNAc). The C-terminal domain catalyzes the transfer of acetyl group from acetyl coenzyme A to glucosamine-1-phosphate (GlcN-1-P) to produce N-acetylglucosamine-1-phosphate (GlcNAc-1-P), which is converted into UDP-GlcNAc by the transfer of uridine 5-monophosphate (from uridine 5-triphosphate), a reaction catalyzed by the N-terminal domain. In Legionella pneumophila subsp. pneumophila (strain Philadelphia 1 / ATCC 33152 / DSM 7513), this protein is Bifunctional protein GlmU.